We begin with the raw amino-acid sequence, 429 residues long: Gamma-glutamyl phosphate reductase (429 aa).

This sequence belongs to the gamma-glutamyl phosphate reductase family.

Its subcellular location is the cytoplasm. It catalyses the reaction L-glutamate 5-semialdehyde + phosphate + NADP(+) = L-glutamyl 5-phosphate + NADPH + H(+). The protein operates within amino-acid biosynthesis; L-proline biosynthesis; L-glutamate 5-semialdehyde from L-glutamate: step 2/2. Its function is as follows. Catalyzes the NADPH-dependent reduction of L-glutamate 5-phosphate into L-glutamate 5-semialdehyde and phosphate. The product spontaneously undergoes cyclization to form 1-pyrroline-5-carboxylate. This Methylocella silvestris (strain DSM 15510 / CIP 108128 / LMG 27833 / NCIMB 13906 / BL2) protein is Gamma-glutamyl phosphate reductase.